Reading from the N-terminus, the 713-residue chain is Nucleolin (713 aa).

A disordered region spans residues 1–309 (MVKLAKAGKT…QKIEGSEPTT (309 aa)). Residues K9, K15, and K16 each carry the N6-acetyllysine modification. Acidic residues predominate over residues 24–46 (VEEDSEDEEMSEDEDDSSGEEEV). Residues S28, S34, S40, and S41 each carry the phosphoserine modification. A compositionally biased stretch (low complexity) spans 56–111 (ATTTPAKKVVVSQTKKAAVPTPAKKAAVTPGKKAAATPAKKAVTPAKVVPTPGKKG). Residues 58–65 (TTPAKKVV) form repeat 1. The tract at residues 58–135 (TTPAKKVVVS…GAVTPAKGAK (78 aa)) is 8 X 8 AA tandem repeats of X-T-P-X-K-K-X-X. A Phosphoserine modification is found at S67. 4 positions are modified to phosphothreonine: T69, T76, T84, and T92. 3 tandem repeats follow at residues 75-82 (PTPAKKAA), 83-90 (VTPGKKAA), and 91-98 (ATPAKKAV). K96 bears the N6-acetyllysine mark. Position 99 is a phosphothreonine (T99). A 5; truncated repeat occupies 99–104 (TPAKVV). An N6-acetyllysine modification is found at K102. Copy 6 of the repeat occupies 105-112 (PTPGKKGA). Position 106 is a phosphothreonine (T106). K109 and K116 each carry N6-acetyllysine. 2 tandem repeats follow at residues 120–127 (PTPGKKGA) and 128–135 (VTPAKGAK). T121 is modified (phosphothreonine). K124 carries the post-translational modification N6-acetyllysine. 2 positions are modified to phosphoserine: S145 and S157. Over residues 145–168 (SDEDEDEEDEDDSDEDEDEEDEFE) the composition is skewed to acidic residues. The segment covering 169–186 (PPVVKGVKPAKAAPAAPA) has biased composition (low complexity). A phosphoserine mark is found at S187 and S213. The span at 187-218 (SEDEDEEDDDDEDDDDDDEEEEEEDDSEEEVM) shows a compositional bias: acidic residues. T221 is modified (phosphothreonine). Over residues 242-275 (EEEEDDEDDEDEEEDEDEEDEEDDEDEDEEEEEE) the composition is skewed to acidic residues. The span at 288–304 (MTKQKEAPEAKKQKIEG) shows a compositional bias: basic and acidic residues. Residue K301 forms a Glycyl lysine isopeptide (Lys-Gly) (interchain with G-Cter in SUMO1); alternate linkage. K301 is covalently cross-linked (Glycyl lysine isopeptide (Lys-Gly) (interchain with G-Cter in SUMO2); alternate). S305 carries the phosphoserine modification. RRM domains lie at 311–387 (FNLF…KPKG) and 397–470 (RTLL…YTGE). K322 is subject to N6-acetyllysine. K328 participates in a covalent cross-link: Glycyl lysine isopeptide (Lys-Gly) (interchain with G-Cter in SUMO1); alternate. Residue K328 forms a Glycyl lysine isopeptide (Lys-Gly) (interchain with G-Cter in SUMO2); alternate linkage. An N6-acetyllysine modification is found at K352. Position 360 is a phosphoserine (S360). A Phosphothreonine modification is found at T371. A Glycyl lysine isopeptide (Lys-Gly) (interchain with G-Cter in SUMO2) cross-link involves residue K374. K381 participates in a covalent cross-link: Glycyl lysine isopeptide (Lys-Gly) (interchain with G-Cter in SUMO2); alternate. K381 bears the N6-acetyllysine; alternate mark. K402 bears the N6-acetyllysine mark. S405 is modified (phosphoserine). Phosphothreonine is present on T409. K448 is modified (N6-acetyllysine). Phosphoserine is present on residues S462 and S464. N6-acetyllysine occurs at positions 471 and 480. The region spanning 489 to 563 (KTLVLSNLSY…RTIRLELQGP (75 aa)) is the RRM 3 domain. K516 is covalently cross-linked (Glycyl lysine isopeptide (Lys-Gly) (interchain with G-Cter in SUMO2); alternate). K516 is modified (N6-acetyllysine; alternate). K524 is subject to N6-acetyllysine. Phosphoserine is present on S566. Position 575 is an N6-acetyllysine (K575). Residues 575-650 (KTLFVKGLSE…NKVTLDWAKP (76 aa)) form the RRM 4 domain. A Glycyl lysine isopeptide (Lys-Gly) (interchain with G-Cter in SUMO2); alternate cross-link involves residue K580. Residue K580 is modified to N6-acetyllysine; alternate. A Phosphoserine modification is found at S583. Residue K592 forms a Glycyl lysine isopeptide (Lys-Gly) (interchain with G-Cter in SUMO1); alternate linkage. A Glycyl lysine isopeptide (Lys-Gly) (interchain with G-Cter in SUMO2); alternate cross-link involves residue K592. Phosphoserine is present on residues S594 and S622. K627 is covalently cross-linked (Glycyl lysine isopeptide (Lys-Gly) (interchain with G-Cter in SUMO2)). The interval 645–713 (LDWAKPKGEG…KPQGKKTKFE (69 aa)) is disordered. K649 carries the post-translational modification N6-acetyllysine. Over residues 653–702 (EGGFGGRGGGRGGFGGRGGGRGGRGGFGGRGRGGFGGRGGFRGGRGGGGD) the composition is skewed to gly residues. Asymmetric dimethylarginine is present on residues R659, R663, R669, R673, R676, R682, R684, R690, and R694. An Asymmetric dimethylarginine; alternate modification is found at R697. R697 is modified (omega-N-methylarginine; alternate).

As to quaternary structure, identified in a IGF2BP1-dependent mRNP granule complex containing untranslated mRNAs. Component of the SWAP complex that consists of NPM1, NCL/nucleolin, PARP1 and SWAP70. Component of a complex which is at least composed of HTATSF1/Tat-SF1, the P-TEFb complex components CDK9 and CCNT1, RNA polymerase II, SUPT5H, and NCL/nucleolin. Interacts with AICDA. Interacts with APTX. Interacts with C1QBP. Interacts with ERBB4. Interacts (via C-terminus) with FMR1 isoform 6 (via N-terminus). Interacts with GZF1; this interaction is important for nucleolar localization of GZF1. Interacts with NSUN2. Interacts with NVL. Interacts (via N-terminus domain) with SETX. Interacts (via RRM1 and C-terminal RRM4/Arg/Gly-rich domains) with TERT; the interaction is important for nucleolar localization of TERT. Interacts with WDR46. Interacts with ZFP36. Interacts with LRRC34. Interacts with RRP1B. Interacts with HNRNPU; this interaction occurs during mitosis. Interacts with RIOK1; RIOK1 recruits NCL to PRMT5 for symmetrically methylation. Interacts with ZBTB7B. Interacts with MDK; this interaction promotes NCL clustering and lateral movements of this complex into lipid rafts leading to MDK internalization. Interacts with HDGF. Interacts with ALKBH2. Interacts with IGFBP5; this interaction is necessary for IGFBP5 localization to the nucleus. Interacts with DDX24 (when ubiquitinated); this interaction may be important during ribosome biogenesis. Some glutamate residues are glycylated by TTLL8. This modification occurs exclusively on glutamate residues and results in a glycine chain on the gamma-carboxyl group. Post-translationally, symmetrically methylated by PRMT5.

It is found in the nucleus. Its subcellular location is the nucleolus. The protein localises to the cytoplasm. Functionally, nucleolin is the major nucleolar protein of growing eukaryotic cells. It is found associated with intranucleolar chromatin and pre-ribosomal particles. It induces chromatin decondensation by binding to histone H1. It is thought to play a role in pre-rRNA transcription and ribosome assembly. May play a role in the process of transcriptional elongation. Binds RNA oligonucleotides with 5'-UUAGGG-3' repeats more tightly than the telomeric single-stranded DNA 5'-TTAGGG-3' repeats. This Rattus norvegicus (Rat) protein is Nucleolin (Ncl).